The primary structure comprises 419 residues: Putative zinc metalloprotease SPs1691 (419 aa).

His-18 lines the Zn(2+) pocket. Glu-19 is an active-site residue. His-22 is a Zn(2+) binding site. 4 helical membrane passes run 169–191, 301–323, 343–365, and 392–411; these read LITNFAGPMNNFILGIVVFILLV, LAWSGAFTILNALKGLITGFSLN, LESVLSLMAMLSINLGIFNLIPI, and AYITLAGVAIMVVLMIAVTW. Residues 175–274 enclose the PDZ domain; that stretch reads GPMNNFILGI…LKTVAVKPQK (100 aa).

It belongs to the peptidase M50B family. Zn(2+) serves as cofactor.

The protein resides in the cell membrane. This chain is Putative zinc metalloprotease SPs1691 (eep), found in Streptococcus pyogenes serotype M3 (strain SSI-1).